We begin with the raw amino-acid sequence, 526 residues long: Putative ankyrin repeat protein R840 (526 aa).

ANK repeat units follow at residues 78 to 107, 108 to 137, 139 to 167, 169 to 197, 198 to 227, 229 to 255, 256 to 285, 286 to 315, 317 to 345, 346 to 375, 376 to 405, 406 to 435, 437 to 467, 468 to 497, and 499 to 526; these read TLNE…NIRS, RDNF…DIRS, KNYA…NIRD, DNCA…DSTS, NFNE…RCRN, SAII…NIRI, DDDY…NIRS, EIDH…DIKS, YDRS…NIRN, INDY…NIRV, DNDS…DIRV, NNYQ…NVSI, NVPL…DINL, ADDM…NVRA, and NDYA…AILS.

The protein is Putative ankyrin repeat protein R840 of Acanthamoeba polyphaga (Amoeba).